We begin with the raw amino-acid sequence, 678 residues long: SPS-sensor component PTR3 (678 aa).

Disordered stretches follow at residues T111 to T158 and A179 to L211. Residues T127–T144 show a composition bias toward low complexity. Over residues A149–T158 the composition is skewed to basic and acidic residues. Residues A179–T194 show a composition bias toward polar residues.

Homodimer. Component of the plasma membrane SPS (SSY1-PTR3-SSY5) amino acid sensor complex. Interacts directly with SSY1 and SSY5. In terms of processing, hyperphosphorylated in response to extracellular amino acids and dependent on the amino acid sensor component SSY1. Phosphorylation is positively regulated by casein kinases YCK1 and YCK2, and negatively regulated by phosphatase PP2A regulatory subunit RTS1.

Its subcellular location is the cell membrane. Component of the SPS-sensor system, which regulates the expression of several amino acid-metabolizing enzymes and amino acid- and peptide-permeases in response to extracellular amino acid levels by controlling the activity of two transcription factors, STP1 and STP2. In Saccharomyces cerevisiae (strain ATCC 204508 / S288c) (Baker's yeast), this protein is SPS-sensor component PTR3 (PTR3).